A 237-amino-acid polypeptide reads, in one-letter code: tRNA (guanine-N(1)-)-methyltransferase (237 aa).

Residues Gly113 and 133 to 138 each bind S-adenosyl-L-methionine; that span reads MGDYIL.

It belongs to the RNA methyltransferase TrmD family. In terms of assembly, homodimer.

Its subcellular location is the cytoplasm. The enzyme catalyses guanosine(37) in tRNA + S-adenosyl-L-methionine = N(1)-methylguanosine(37) in tRNA + S-adenosyl-L-homocysteine + H(+). Its function is as follows. Specifically methylates guanosine-37 in various tRNAs. This is tRNA (guanine-N(1)-)-methyltransferase from Wolinella succinogenes (strain ATCC 29543 / DSM 1740 / CCUG 13145 / JCM 31913 / LMG 7466 / NCTC 11488 / FDC 602W) (Vibrio succinogenes).